We begin with the raw amino-acid sequence, 588 residues long: MFS siderochrome iron transporter 1 (588 aa).

Helical transmembrane passes span 60 to 80 (QVWS…ITFV), 104 to 124 (LTAS…LPLA), 133 to 153 (PQGF…MAAC), 161 to 181 (AAQV…SIFI), 191 to 211 (ALMF…GGPL), 225 to 245 (YGAF…VFAW), 278 to 298 (IIGI…FSLY), 307 to 327 (SSLV…FALY), 348 to 368 (LGAC…DSYF), 385 to 405 (YIVN…GILV), 413 to 433 (WLAL…MITF), 440 to 460 (IGYI…CVIT), and 473 to 495 (YVAV…GQTV). N-linked (GlcNAc...) asparagine glycosylation is present at N519. Residues 552–572 (KYMLIGGTAILAVGLGATMMW) form a helical membrane-spanning segment.

This sequence belongs to the major facilitator superfamily.

It is found in the membrane. Functionally, major facilitator transporter involved in siderophore transport. This is MFS siderochrome iron transporter 1 from Ajellomyces capsulatus (Darling's disease fungus).